Consider the following 384-residue polypeptide: MTNSSSTSTSTTTGGSLLLLCEEEESWAGRRIPVSLLYSGLAIGGTLANGMVIYLVSSFRKLQTTSNAFIVNGCAADLSVCALWMPQEAVLGLLPSGSAEPPGDWDGGGGSYRLLRGGLLGLGLTVSLLSHCLVALNRYLLITRAPATYQVLYQRRHTVGMLALSWALALGLVLLLPPWAPKPGAEPPQVHYPALLAAGALLAQTALLLHCYLGIVRRVRVSVKRVSVLNFHLLHQLPGCAAAAAAFPAAPHAPGPGGAAHPAQPQPLPAALQPRRAQRRLSGLSVLLLCCVFLLATQPLVWVSLASGFSLPVPWGVQAASWLLCCALSALNPLLYTWRNEEFRRSVRSVLPGVGDAAAAAAAATAVPAMSQAQLGTRAAGQHW.

At 1–35 the chain is on the extracellular side; that stretch reads MTNSSSTSTSTTTGGSLLLLCEEEESWAGRRIPVS. N-linked (GlcNAc...) asparagine glycosylation occurs at Asn3. The chain crosses the membrane as a helical span at residues 36-56; sequence LLYSGLAIGGTLANGMVIYLV. The Cytoplasmic segment spans residues 57–73; that stretch reads SSFRKLQTTSNAFIVNG. The helical transmembrane segment at 74–94 threads the bilayer; sequence CAADLSVCALWMPQEAVLGLL. At 95–116 the chain is on the extracellular side; the sequence is PSGSAEPPGDWDGGGGSYRLLR. A helical membrane pass occupies residues 117–136; sequence GGLLGLGLTVSLLSHCLVAL. The Cytoplasmic portion of the chain corresponds to 137–158; sequence NRYLLITRAPATYQVLYQRRHT. Residues 159–179 form a helical membrane-spanning segment; it reads VGMLALSWALALGLVLLLPPW. Residues 180 to 195 are Extracellular-facing; that stretch reads APKPGAEPPQVHYPAL. A helical membrane pass occupies residues 196–216; that stretch reads LAAGALLAQTALLLHCYLGIV. Residues 217–285 are Cytoplasmic-facing; that stretch reads RRVRVSVKRV…RAQRRLSGLS (69 aa). Residues 286 to 306 form a helical membrane-spanning segment; it reads VLLLCCVFLLATQPLVWVSLA. Residues 307–310 are Extracellular-facing; that stretch reads SGFS. A helical membrane pass occupies residues 311-331; that stretch reads LPVPWGVQAASWLLCCALSAL. Residues 332-384 are Cytoplasmic-facing; it reads NPLLYTWRNEEFRRSVRSVLPGVGDAAAAAAAATAVPAMSQAQLGTRAAGQHW.

It belongs to the G-protein coupled receptor 1 family. Expressed predominantly in the striatum.

Its subcellular location is the cell membrane. It localises to the cell projection. The protein resides in the cilium membrane. It is found in the cytoplasm. The protein localises to the nucleus. In terms of biological role, orphan G protein-coupled receptor implicated in a large repertoire of behavioral responses that engage motor activities, spatial learning, and emotional processing. May play a role in the regulation of cognitive and motor function. Couples with the heterotrimeric G protein complex of the G(i) subfamily, consisting of GNAI1, GNB1 and GNG2, thereby acting through a G(i)-mediated pathway. Plays a role in the attenuation of D1 dopamine receptor (D1R)-mediated cAMP response in ciliated cells. In on-ciliated cells, involved in the inhibition of the beta-2 adrenergic receptor (B2AR) response. This chain is G protein-coupled receptor 88 (Gpr88), found in Mus musculus (Mouse).